Reading from the N-terminus, the 675-residue chain is Methionine--tRNA ligase (675 aa).

Positions 15 to 25 match the 'HIGH' region motif; that stretch reads PYANGSIHLGH. The Zn(2+) site is built by Cys-146, Cys-149, Cys-159, and Cys-162. The 'KMSKS' region motif lies at 332–336; it reads KMSKS. Residue Lys-335 coordinates ATP. The 102-residue stretch at 574-675 folds into the tRNA-binding domain; that stretch reads DFAKLDLRIA…AGAKPGMRVK (102 aa).

Belongs to the class-I aminoacyl-tRNA synthetase family. MetG type 1 subfamily. In terms of assembly, homodimer. Zn(2+) is required as a cofactor.

Its subcellular location is the cytoplasm. It carries out the reaction tRNA(Met) + L-methionine + ATP = L-methionyl-tRNA(Met) + AMP + diphosphate. Functionally, is required not only for elongation of protein synthesis but also for the initiation of all mRNA translation through initiator tRNA(fMet) aminoacylation. The sequence is that of Methionine--tRNA ligase from Tolumonas auensis (strain DSM 9187 / NBRC 110442 / TA 4).